Reading from the N-terminus, the 182-residue chain is Large ribosomal subunit protein bL17m (182 aa).

The protein belongs to the bacterial ribosomal protein bL17 family.

The protein localises to the mitochondrion. In Dictyostelium discoideum (Social amoeba), this protein is Large ribosomal subunit protein bL17m (mrpl17).